A 144-amino-acid chain; its full sequence is Large ribosomal subunit protein uL22 (144 aa).

Residues 124 to 137 (RLKKRVLGQNKRKQ) are compositionally biased toward basic residues. The tract at residues 124–144 (RLKKRVLGQNKRKQSVSGEKK) is disordered.

This sequence belongs to the universal ribosomal protein uL22 family. In terms of assembly, part of the 50S ribosomal subunit.

This protein binds specifically to 23S rRNA; its binding is stimulated by other ribosomal proteins, e.g. L4, L17, and L20. It is important during the early stages of 50S assembly. It makes multiple contacts with different domains of the 23S rRNA in the assembled 50S subunit and ribosome. Functionally, the globular domain of the protein is located near the polypeptide exit tunnel on the outside of the subunit, while an extended beta-hairpin is found that lines the wall of the exit tunnel in the center of the 70S ribosome. The polypeptide is Large ribosomal subunit protein uL22 (Mycoplasmoides gallisepticum (strain R(low / passage 15 / clone 2)) (Mycoplasma gallisepticum)).